The sequence spans 359 residues: 5-formaminoimidazole-4-carboxamide-1-(beta)-D-ribofuranosyl 5'-monophosphate synthetase (359 aa).

5-amino-1-(5-phospho-beta-D-ribosyl)imidazole-4-carboxamide is bound by residues H27 and S94. Positions 116 to 340 (RRLLRWESER…FGEIVTMGRR (225 aa)) constitute an ATP-grasp domain. Residues 146 to 208 (PEDI…TNFC) and E230 contribute to the ATP site. 5-amino-1-(5-phospho-beta-D-ribosyl)imidazole-4-carboxamide is bound at residue N258. Residues Q297 and E310 each coordinate Mg(2+).

Belongs to the phosphohexose mutase family. Requires Mg(2+) as cofactor. Mn(2+) serves as cofactor.

The catalysed reaction is 5-amino-1-(5-phospho-beta-D-ribosyl)imidazole-4-carboxamide + formate + ATP = 5-formamido-1-(5-phospho-D-ribosyl)imidazole-4-carboxamide + ADP + phosphate. The protein operates within purine metabolism; IMP biosynthesis via de novo pathway; 5-formamido-1-(5-phospho-D-ribosyl)imidazole-4-carboxamide from 5-amino-1-(5-phospho-D-ribosyl)imidazole-4-carboxamide (formate route): step 1/1. Its function is as follows. Catalyzes the ATP- and formate-dependent formylation of 5-aminoimidazole-4-carboxamide-1-beta-d-ribofuranosyl 5'-monophosphate (AICAR) to 5-formaminoimidazole-4-carboxamide-1-beta-d-ribofuranosyl 5'-monophosphate (FAICAR) in the absence of folates. This chain is 5-formaminoimidazole-4-carboxamide-1-(beta)-D-ribofuranosyl 5'-monophosphate synthetase, found in Methanopyrus kandleri (strain AV19 / DSM 6324 / JCM 9639 / NBRC 100938).